The sequence spans 219 residues: Ras-related protein Rab-3B (219 aa).

Residue alanine 2 is modified to N-acetylalanine. The GTP site is built by serine 31, serine 32, valine 33, glycine 34, lysine 35, threonine 36, serine 37, proline 49, and serine 53. Residue threonine 36 participates in Mg(2+) binding. A Switch 1 motif is present at residues 45 to 58 (DTFTPAFVSTVGID). Mg(2+)-binding residues include threonine 54 and aspartate 77. A Switch 2 motif is present at residues 78-96 (TAGQERYRTITTAYYRGAM). Residue glycine 80 coordinates GTP. Position 86 is a phosphothreonine; by LRRK2 (threonine 86). GTP-binding residues include asparagine 135, lysine 136, aspartate 138, alanine 166, and lysine 167. Phosphoserine occurs at positions 188 and 190. 2 S-geranylgeranyl cysteine lipidation sites follow: cysteine 217 and cysteine 219. Cysteine 219 bears the Cysteine methyl ester mark.

Belongs to the small GTPase superfamily. Rab family. Interacts with RIMS1, RIMS2, RPH3A and RPH3AL. The GTP-bound form interacts with GAS8/DRC4 (via coiled-coil domains). Interacts with GDI2, CHM and CHML; phosphorylation at Thr-86 disrupts these interactions. Interacts with MADD (via uDENN domain); the GTP-bound form is preferred for interaction. Mg(2+) is required as a cofactor. Post-translationally, phosphorylation of Thr-86 in the switch II region by LRRK2 prevents the association of RAB regulatory proteins, including CHM, CHML and RAB GDP dissociation inhibitor GDI2. Abundantly expressed in testis, lung and brain.

It localises to the cell membrane. The protein resides in the golgi apparatus. It catalyses the reaction GTP + H2O = GDP + phosphate + H(+). Regulated by guanine nucleotide exchange factors (GEFs) which promote the exchange of bound GDP for free GTP. Regulated by GTPase activating proteins (GAPs) which increase the GTP hydrolysis activity. Inhibited by GDP dissociation inhibitors (GDIs) which prevent Rab-GDP dissociation. The small GTPases Rab are key regulators of intracellular membrane trafficking, from the formation of transport vesicles to their fusion with membranes. Rabs cycle between an inactive GDP-bound form and an active GTP-bound form that is able to recruit to membranes different sets of downstream effectors directly responsible for vesicle formation, movement, tethering and fusion. The polypeptide is Ras-related protein Rab-3B (Mus musculus (Mouse)).